Here is a 72-residue protein sequence, read N- to C-terminus: DNA-directed RNA polymerase subunit Rpo10 (72 aa).

The Zn(2+) site is built by C7, C10, C53, and C54.

This sequence belongs to the archaeal Rpo10/eukaryotic RPB10 RNA polymerase subunit family. Part of the RNA polymerase complex. Zn(2+) serves as cofactor.

The protein localises to the cytoplasm. It carries out the reaction RNA(n) + a ribonucleoside 5'-triphosphate = RNA(n+1) + diphosphate. DNA-dependent RNA polymerase (RNAP) catalyzes the transcription of DNA into RNA using the four ribonucleoside triphosphates as substrates. The sequence is that of DNA-directed RNA polymerase subunit Rpo10 from Thermoplasma acidophilum (strain ATCC 25905 / DSM 1728 / JCM 9062 / NBRC 15155 / AMRC-C165).